The chain runs to 327 residues: Small ribosomal subunit protein RACK1 (327 aa).

WD repeat units follow at residues Ala-13–Lys-44, Gly-61–Asp-91, Gly-103–Asn-133, Gly-148–Asn-180, Gly-192–Asp-222, Glu-233–Asp-262, and Arg-293–Gly-323.

The protein belongs to the WD repeat G protein beta family. Ribosomal protein RACK1 subfamily.

The polypeptide is Small ribosomal subunit protein RACK1 (GB1) (Brassica napus (Rape)).